The sequence spans 456 residues: CBL-interacting protein kinase 16 (456 aa).

Residues 22-277 (YELGRLLGQG…IPEIMRTPWF (256 aa)) form the Protein kinase domain. Residues 28–36 (LGQGTFAKV) and Lys-51 each bind ATP. The Proton acceptor role is filled by Asp-145. The segment at 163 to 192 (DFGLAALPEQLRQDGLLHTQCGTPAYVAPE) is activation loop. In terms of domain architecture, NAF spans 309–335 (AMSPRTCNAFQLISSMSSGFDLSGMFE). Positions 339-368 (KAATVFTSRAPAATVIQKLEAVGRSLGYSA) are PPI.

This sequence belongs to the protein kinase superfamily. CAMK Ser/Thr protein kinase family. SNF1 subfamily. Mn(2+) serves as cofactor.

The catalysed reaction is L-seryl-[protein] + ATP = O-phospho-L-seryl-[protein] + ADP + H(+). The enzyme catalyses L-threonyl-[protein] + ATP = O-phospho-L-threonyl-[protein] + ADP + H(+). Functionally, CIPK serine-threonine protein kinases interact with CBL proteins. Binding of a CBL protein to the regulatory NAF domain of CIPK protein lead to the activation of the kinase in a calcium-dependent manner. This is CBL-interacting protein kinase 16 (CIPK16) from Oryza sativa subsp. japonica (Rice).